Consider the following 633-residue polypeptide: CDK5 and ABL1 enzyme substrate 1 (633 aa).

Low complexity predominate over residues 1-29 (MAAAAAAATTAACSSGSAGTDAAGASGLQ). The segment at 1–99 (MAAAAAAATT…EGGAAKPGAG (99 aa)) is disordered. Residues 1-109 (MAAAAAAATT…GACGARTRFS (109 aa)) form an interaction with TDRD7 region. Over residues 51–61 (PPRKPRMDPRR) the composition is skewed to basic and acidic residues. Phosphoserine occurs at positions 168 and 287. An interaction with CDK3 region spans residues 179–492 (QWQPPRPAPL…TTVIDYVKPS (314 aa)). Ser313 is modified (phosphoserine; by CDK2 and CDK3). Thr415 carries the post-translational modification Phosphothreonine.

It belongs to the cyclin family. Found in a complex with p53/TP53. Found in a number of complexes with CDK2, CDK3, CDK5, ABL1, TDRD7, CDK17, CCNA1, CCNE1 and TP73. Interacts with CDK2, CDK3, CDK5, ABL1 and TDRD7. In terms of processing, phosphorylated on Ser-313 by CCNE1/CDK3. Phosphorylated on serine/threonine residues by CDK5 and on tyrosine residues by ABL1. Also phosphorylated in vitro by CCNA1/CDK2, CCNE1/CDK2, CCNA1/CDK3 and CCNE1/CDK3. In terms of tissue distribution, expressed in breast, pancreas, colon, head and neck (at protein level). Strongly decreased in more than half of cases of atypical endometrial hyperplasia and in more than 90% of endometrial cancers.

It localises to the nucleus. It is found in the cytoplasm. Its function is as follows. Cyclin-dependent kinase binding protein. Enhances cyclin-dependent kinase tyrosine phosphorylation by nonreceptor tyrosine kinases, such as that of CDK5 by activated ABL1, which leads to increased CDK5 activity and is critical for neuronal development, and that of CDK2 by WEE1, which leads to decreased CDK2 activity and growth inhibition. Positively affects neuronal outgrowth. Plays a role as a regulator for p53/p73-induced cell death. In Homo sapiens (Human), this protein is CDK5 and ABL1 enzyme substrate 1 (CABLES1).